Reading from the N-terminus, the 305-residue chain is MDLSGVKKKSLLGVKENNKKSSTRAPSPTKRKDRSDEKSKDRSKDKGTTKESSEKDRGRDKTRKRRSASSGSSSTRSRSSSTSSSGSSTSTGSSSGSSSSSASSRSGSSSTSRSSSSSSSSGSPSPSRRRHDNRRRSRSKSKPPKRDEKERKRRSPSPKPTKVHIGRLTRNVTKDHIMEIFSTYGKIKMIDMPVERMHPHLSKGYAYVEFENPDEAEKALKHMDGGQIDGQEITATAVLAPWPRPPPRRFSPPRRMLPPPPMWRRSPPRMRRRSRSPRRRSPVRRRSRSPGRRRHRSRSSSNSSR.

Over residues Met-1–Ser-10 the composition is skewed to basic residues. A necessary for interaction with SRP54, nuclear localization and exon-skipping region spans residues Met-1–Thr-161. Residues Met-1 to Arg-170 are disordered. The interval Met-1–Leu-220 is necessary for interaction with the cleaved p110 isoform of CDC2L1. Glycyl lysine isopeptide (Lys-Gly) (interchain with G-Cter in SUMO2) cross-links involve residues Lys-7 and Lys-15. Positions Asp-33–Arg-59 are enriched in basic and acidic residues. A Phosphoserine modification is found at Ser-53. The segment covering Ala-68 to Pro-126 has biased composition (low complexity). Residues Ser-69–Ser-121 form a necessary for interactions with UPF2 and UPF3B and UPF2-dependent NMD region. Basic residues-rich tracts occupy residues Ser-127–Pro-143 and Arg-151–Arg-167. Phosphoserine is present on residues Ser-155 and Ser-157. Positions Pro-156–Trp-242 are necessary for interaction with PNN and exon-skipping. Residues Lys-159–Arg-244 form an interaction with SAP18 and ACIN1 region. At Thr-161 the chain carries Phosphothreonine. Positions Thr-161–Ala-240 constitute an RRM domain. Lys-218 carries the post-translational modification N6-acetyllysine. Positions Val-238–Arg-305 are necessary for interaction with TRA2B, nuclear localization and exon-skipping. The disordered stretch occupies residues Ala-240 to Arg-305. Pro residues predominate over residues Trp-242–Met-262. Basic residues predominate over residues Ser-266–Arg-298.

The protein belongs to the splicing factor SR family. In terms of assembly, found in mRNA splicing-dependent exon junction complexes (EJC). Found in a post-splicing complex with NXF1, RBM8A, UPF1, UPF2, UPF3A, UPF3B and RNPS1. Component of the heterotrimeric ASAP (apoptosis- and splicing-associated protein) and PSAP complexes consisting of RNPS1, SAP18 and either ACIN1 or PNN, respectively; the ASAP and PSAP complexes probably are formed mutually exclusive. Component of the active spliceosome. Associates with polysomes. Interacts with the cleaved p110 isoform of CDC2L1, CSNK2A1, PNN, SART3, SRP54, SRRM1 and TRA2B/SFRS10. Post-translationally, phosphorylated on one or more of the four Ser/Thr residues (Ser-43, Thr-49, Ser-52 or Ser-53). Ser-53 phosphorylation site is important for splicing and translation stimulation activity in vitro.

The protein resides in the nucleus. Its subcellular location is the nucleus speckle. It is found in the cytoplasm. Its function is as follows. Part of pre- and post-splicing multiprotein mRNP complexes. Auxiliary component of the splicing-dependent multiprotein exon junction complex (EJC) deposited at splice junction on mRNAs. The EJC is a dynamic structure consisting of core proteins and several peripheral nuclear and cytoplasmic associated factors that join the complex only transiently either during EJC assembly or during subsequent mRNA metabolism. Component of the ASAP and PSAP complexes which bind RNA in a sequence-independent manner and are proposed to be recruited to the EJC prior to or during the splicing process and to regulate specific excision of introns in specific transcription subsets. The ASAP complex can inhibit RNA processing during in vitro splicing reactions. The ASAP complex promotes apoptosis and is disassembled after induction of apoptosis. Enhances the formation of the ATP-dependent A complex of the spliceosome. Involved in both constitutive splicing and, in association with SRP54 and TRA2B/SFRS10, in distinctive modulation of alternative splicing in a substrate-dependent manner. Involved in the splicing modulation of BCL2L1/Bcl-X (and probably other apoptotic genes); specifically inhibits formation of proapoptotic isoforms such as Bcl-X(S); the activity is different from the established EJC assembly and function. Participates in mRNA 3'-end cleavage. Involved in UPF2-dependent nonsense-mediated decay (NMD) of mRNAs containing premature stop codons. Also mediates increase of mRNA abundance and translational efficiency. Binds spliced mRNA 20-25 nt upstream of exon-exon junctions. The chain is RNA-binding protein with serine-rich domain 1 (Rnps1) from Rattus norvegicus (Rat).